A 348-amino-acid polypeptide reads, in one-letter code: uncharacterized protein (348 aa).

May be involved in apoptosis regulation. This is an uncharacterized protein from Mus musculus (Mouse).